A 341-amino-acid chain; its full sequence is UDP-N-acetylenolpyruvoylglucosamine reductase (341 aa).

Residues 19-191 (MAVRAAHFCQ…TAVRFRLSRR (173 aa)) form the FAD-binding PCMH-type domain. The active site involves arginine 167. Serine 241 functions as the Proton donor in the catalytic mechanism. Residue glutamate 337 is part of the active site.

This sequence belongs to the MurB family. FAD serves as cofactor.

Its subcellular location is the cytoplasm. It catalyses the reaction UDP-N-acetyl-alpha-D-muramate + NADP(+) = UDP-N-acetyl-3-O-(1-carboxyvinyl)-alpha-D-glucosamine + NADPH + H(+). Its pathway is cell wall biogenesis; peptidoglycan biosynthesis. Its function is as follows. Cell wall formation. The polypeptide is UDP-N-acetylenolpyruvoylglucosamine reductase (Chromobacterium violaceum (strain ATCC 12472 / DSM 30191 / JCM 1249 / CCUG 213 / NBRC 12614 / NCIMB 9131 / NCTC 9757 / MK)).